The chain runs to 496 residues: E3 ubiquitin-protein ligase XIAP (496 aa).

BIR repeat units follow at residues 26–93, 163–230, and 264–329; these read EFNR…CRFI, EEAR…CFFV, and YDAR…CKYL. 3 residues coordinate Zn(2+): C299, C302, and H319. Residue K321 forms a Glycyl lysine isopeptide (Lys-Gly) (interchain with G-Cter in ubiquitin) linkage. Residue C326 coordinates Zn(2+). K327 is covalently cross-linked (Glycyl lysine isopeptide (Lys-Gly) (interchain with G-Cter in ubiquitin)). C449 bears the S-nitrosocysteine mark. An RING-type zinc finger spans residues 449-484; sequence CKICMDRNIAIVFVPCGHLVTCKQCAEAVDKCPMCC.

The protein belongs to the IAP family. Monomer, and homodimer. Interacts (via BIR3 domain) with DIABLO/SMAC; the interaction inhibits apoptotic suppressor activity. Interacts with HTRA2/PRSS25; the interaction inhibits apoptotic suppressor activity. Interacts with TAB1/MAP3K7IP1 and AIFM1. Interaction with DIABLO/SMAC hinders binding of TAB1/MAP3K7IP1 and AIFM1. Interacts with TCF25 and COMMD1. Interacts (via BIR3 domain) with SEPTIN4. Interacts with RIP1, RIP2, RIP3, RIP4, CCS and USP19. Interacts (via BIR 2 domain and BIR 3 domain) with HAX1 (via C-terminus) and this interaction blocks ubiquitination of XIAP/BIRC4. Interacts with the monomeric form of BIRC5/survivin. Interacts with TLE3 and TCF7L2/TCF4. Interacts (via BIR 3 and RING domains) with PDCL3. Post-translationally, S-Nitrosylation down-regulates its E3 ubiquitin-protein ligase activity. In terms of processing, autoubiquitinated. Ubiquitinated by TRIM32; leading to proteasomal degradation.

The protein localises to the cytoplasm. It localises to the nucleus. The enzyme catalyses S-ubiquitinyl-[E2 ubiquitin-conjugating enzyme]-L-cysteine + [acceptor protein]-L-lysine = [E2 ubiquitin-conjugating enzyme]-L-cysteine + N(6)-ubiquitinyl-[acceptor protein]-L-lysine.. Its function is as follows. Multi-functional protein which regulates not only caspases and apoptosis, but also modulates inflammatory signaling and immunity, copper homeostasis, mitogenic kinase signaling, cell proliferation, as well as cell invasion and metastasis. Acts as a direct caspase inhibitor. Directly bind to the active site pocket of CASP3 and CASP7 and obstructs substrate entry. Inactivates CASP9 by keeping it in a monomeric, inactive state. Acts as an E3 ubiquitin-protein ligase regulating NF-kappa-B signaling and the target proteins for its E3 ubiquitin-protein ligase activity include: RIPK1, RIPK2, MAP3K2/MEKK2, DIABLO/SMAC, AIFM1, CCS, PTEN and BIRC5/survivin. Acts as an important regulator of innate immunity by mediating 'Lys-63'-linked polyubiquitination of RIPK2 downstream of NOD1 and NOD2, thereby transforming RIPK2 into a scaffolding protein for downstream effectors, ultimately leading to activation of the NF-kappa-B and MAP kinases signaling. 'Lys-63'-linked polyubiquitination of RIPK2 also promotes recruitment of the LUBAC complex to RIPK2. Regulates the BMP signaling pathway and the SMAD and MAP3K7/TAK1 dependent pathways leading to NF-kappa-B and JNK activation. Ubiquitination of CCS leads to enhancement of its chaperone activity toward its physiologic target, SOD1, rather than proteasomal degradation. Ubiquitination of MAP3K2/MEKK2 and AIFM1 does not lead to proteasomal degradation. Plays a role in copper homeostasis by ubiquitinating COMMD1 and promoting its proteasomal degradation. Can also function as E3 ubiquitin-protein ligase of the NEDD8 conjugation pathway, targeting effector caspases for neddylation and inactivation. Ubiquitinates and therefore mediates the proteasomal degradation of BCL2 in response to apoptosis. Protects cells from spontaneous formation of the ripoptosome, a large multi-protein complex that has the capability to kill cancer cells in a caspase-dependent and caspase-independent manner. Suppresses ripoptosome formation by ubiquitinating RIPK1 and CASP8. Acts as a positive regulator of Wnt signaling and ubiquitinates TLE1, TLE2, TLE3, TLE4 and AES. Ubiquitination of TLE3 results in inhibition of its interaction with TCF7L2/TCF4 thereby allowing efficient recruitment and binding of the transcriptional coactivator beta-catenin to TCF7L2/TCF4 that is required to initiate a Wnt-specific transcriptional program. The sequence is that of E3 ubiquitin-protein ligase XIAP (Xiap) from Rattus norvegicus (Rat).